An 817-amino-acid chain; its full sequence is Phosphoenolpyruvate synthase (817 aa).

Catalysis depends on histidine 442, which acts as the Tele-phosphohistidine intermediate. Arginine 540, arginine 587, glutamate 684, glycine 706, threonine 707, asparagine 708, and aspartate 709 together coordinate substrate. Mg(2+) is bound at residue glutamate 684. Residue aspartate 709 coordinates Mg(2+). Cysteine 756 (proton donor) is an active-site residue.

The protein belongs to the PEP-utilizing enzyme family. As to quaternary structure, homooctamer. Mg(2+) serves as cofactor.

It catalyses the reaction pyruvate + ATP + H2O = phosphoenolpyruvate + AMP + phosphate + 2 H(+). Its pathway is carbohydrate biosynthesis; gluconeogenesis. Catalyzes the phosphorylation of pyruvate to phosphoenolpyruvate. This chain is Phosphoenolpyruvate synthase (ppsA), found in Pyrococcus furiosus (strain ATCC 43587 / DSM 3638 / JCM 8422 / Vc1).